We begin with the raw amino-acid sequence, 138 residues long: Nucleoside diphosphate kinase (138 aa).

6 residues coordinate ATP: lysine 12, tyrosine 60, arginine 88, threonine 94, arginine 105, and asparagine 115. Residue histidine 118 is the Pros-phosphohistidine intermediate of the active site.

It belongs to the NDK family. As to quaternary structure, homotetramer. The cofactor is Mg(2+).

It is found in the cytoplasm. The catalysed reaction is a 2'-deoxyribonucleoside 5'-diphosphate + ATP = a 2'-deoxyribonucleoside 5'-triphosphate + ADP. It catalyses the reaction a ribonucleoside 5'-diphosphate + ATP = a ribonucleoside 5'-triphosphate + ADP. Major role in the synthesis of nucleoside triphosphates other than ATP. The ATP gamma phosphate is transferred to the NDP beta phosphate via a ping-pong mechanism, using a phosphorylated active-site intermediate. This is Nucleoside diphosphate kinase from Cutibacterium acnes (strain DSM 16379 / KPA171202) (Propionibacterium acnes).